The sequence spans 484 residues: Protein nucleotidyltransferase YdiU (484 aa).

ATP contacts are provided by G81, G83, R84, K103, D115, G116, R166, and R173. The active-site Proton acceptor is the D244. Mg(2+)-binding residues include N245 and D254. Position 254 (D254) interacts with ATP.

This sequence belongs to the SELO family. Requires Mg(2+) as cofactor. It depends on Mn(2+) as a cofactor.

The enzyme catalyses L-seryl-[protein] + ATP = 3-O-(5'-adenylyl)-L-seryl-[protein] + diphosphate. The catalysed reaction is L-threonyl-[protein] + ATP = 3-O-(5'-adenylyl)-L-threonyl-[protein] + diphosphate. It carries out the reaction L-tyrosyl-[protein] + ATP = O-(5'-adenylyl)-L-tyrosyl-[protein] + diphosphate. It catalyses the reaction L-histidyl-[protein] + UTP = N(tele)-(5'-uridylyl)-L-histidyl-[protein] + diphosphate. The enzyme catalyses L-seryl-[protein] + UTP = O-(5'-uridylyl)-L-seryl-[protein] + diphosphate. The catalysed reaction is L-tyrosyl-[protein] + UTP = O-(5'-uridylyl)-L-tyrosyl-[protein] + diphosphate. Its function is as follows. Nucleotidyltransferase involved in the post-translational modification of proteins. It can catalyze the addition of adenosine monophosphate (AMP) or uridine monophosphate (UMP) to a protein, resulting in modifications known as AMPylation and UMPylation. This chain is Protein nucleotidyltransferase YdiU, found in Shewanella baltica (strain OS155 / ATCC BAA-1091).